The primary structure comprises 492 residues: MPMTFVFITVGFSITIFFSLVSIITLVAFICSVFIPILSIFFRSEGFIFAITCFIEEEVNLIVCGYDISQMNYFLKILGGGREVGRSAIEVGNSDGSIILDYGVNFDEKDNPNFPLQEMPGKVKGFVVSHAHLDHIGALPIYQIGSLNTKVYGTVATRIITETMLKDFLKLSGAKIPYEWVEVRKTMDNFMAIGYGEEVEIDSLKVSLYNAGHIPGSSIIKVSSEKGVIAFTGDINLTETKLMKPAEIENIGDANVLVMESTYGKFNHPNRKDVENDFYDKVMEVVESGGTVLVPAFSLARSQEVLSVLAERNFPYPVYYDGMSREITEIMLGFKEFLNRPDLLKKAYDNFNYVKGWEDRHRAWKEKGVIVASAGMLKGGPAVYYFKKLSENSKNAVFLVSYQAINTPGRKLLEMGKFDEYSGLLKARLEIFDFSSHAGRRQLLEIVKSVKDLEKVVLVHGSPDNESSLADLIKQEIGVEVITPENGQEISL.

Histidine 130, histidine 132, aspartate 134, histidine 135, histidine 213, aspartate 234, and histidine 460 together coordinate a divalent metal cation.

The protein belongs to the metallo-beta-lactamase superfamily. RNA-metabolizing metallo-beta-lactamase-like family. Mg(2+) is required as a cofactor.

Its function is as follows. A 5'-3' exoribonuclease, more active on 5'-monophosphorylated and 5'-hydroxylated RNA than 5'-tri-phosphorylated RNA; note there is no evidence for accumulation of 5'-monophosphorylated RNA in this organism. Translation initiation factor 2 subunit gamma but not subunit alpha protects 5'-tri-phosphorylated RNA from degradation by this enzyme. This is RNase aCSPSF2 from Saccharolobus solfataricus (strain ATCC 35092 / DSM 1617 / JCM 11322 / P2) (Sulfolobus solfataricus).